We begin with the raw amino-acid sequence, 690 residues long: Calpain-9 (690 aa).

Residues 1 to 23 (MPYLHRSLRPQPQPVPGDARTIH) are disordered. Residues 42 to 337 (LFEDADFPAS…FDKVEICNLT (296 aa)) enclose the Calpain catalytic domain. Leu-81, Gly-83, and Asp-88 together coordinate Ca(2+). Cys-97 is a catalytic residue. Glu-167 is a Ca(2+) binding site. Residues His-254 and Asn-278 contribute to the active site. Positions 284, 291, 312, 314, and 316 each coordinate Ca(2+). The tract at residues 338-521 (PDALEDSALH…PQEEETEEEQ (184 aa)) is domain III. 3 EF-hand domains span residues 518-552 (EEEQ…VLQK), 561-589 (LSLL…FRVF), and 591-626 (DKLK…AGFQ). The tract at residues 522 to 690 (QFRALFQRVA…NEFISLTMNI (169 aa)) is domain IV. 10 residues coordinate Ca(2+): Asp-574, Ser-576, Asn-578, Lys-580, Glu-585, Asp-604, Asp-606, Ser-608, Thr-610, and Glu-615.

The protein belongs to the peptidase C2 family. In terms of tissue distribution, predominantly expressed in stomach and small intestine, although low levels of expression in other organs.

The protein localises to the cytoplasm. Functionally, calcium-regulated non-lysosomal thiol-protease. The polypeptide is Calpain-9 (Capn9) (Mus musculus (Mouse)).